We begin with the raw amino-acid sequence, 856 residues long: Putative zinc protease C28F5.4 (856 aa).

Residue histidine 71 participates in Zn(2+) binding. Glutamate 74 (proton acceptor) is an active-site residue. The Zn(2+) site is built by histidine 75 and glutamate 152.

The protein belongs to the peptidase M16 family.

The chain is Putative zinc protease C28F5.4 from Caenorhabditis elegans.